The following is a 350-amino-acid chain: MEPKRIREGYLVKKGSVFNTWKPMWVVLLEDGIEFYKKKSDNSPKGMIPLKGSTLTSPCQDFGKRMFVLKITTTKQQDHFFQAAFLEERDAWVRDIKKAIKCIEGGQKFARKSTRRSIRLPETIDLGALYLSMKDPEKGIKELNLEKDKKVFNHCLTGSGVIDWLVSNKLVRNRQEGLMISASLLSEGYLQPAGDLSKNAADGIAENPFLDSPDAFYYFPDSGFFCEENSSDDDVILREEFRGVIIKQGCLLKQGHRRKNWKVRKFILREDPAYLHYYDPAGGEDPLGAVHLRGCVVTSVESSHDVKKSDEENLFEIITADEVHYYLQAATSKERTEWIKAIQVASRTGK.

Residues 4-101 (KRIREGYLVK…WVRDIKKAIK (98 aa)) form the PH 1 domain. The residue at position 64 (lysine 64) is an N6-acetyllysine. Phosphoserine is present on residues serine 113 and serine 117. The 86-residue stretch at 136-221 (PEKGIKELNL…SPDAFYYFPD (86 aa)) folds into the DEP domain. In terms of domain architecture, PH 2 spans 244–347 (VIIKQGCLLK…WIKAIQVASR (104 aa)).

Its function is as follows. Major protein kinase C substrate of platelets. The chain is Pleckstrin (Plek) from Mus musculus (Mouse).